The sequence spans 273 residues: Protein BMH2 (273 aa).

At S2 the chain carries N-acetylserine. Positions 236-273 (DISESGQEDQQQQQQQQQQQQQQQQQAPAEQTQGEPTK) are disordered. Residues 245–261 (QQQQQQQQQQQQQQQQQ) show a composition bias toward low complexity. A compositionally biased stretch (polar residues) spans 262–273 (APAEQTQGEPTK).

This sequence belongs to the 14-3-3 family. Interacts with NTH1 (via N-terminus when phosphorylated by PKA); the interaction is direct and activates NTH1. Interacts with FIN1.

The protein resides in the cytoplasm. It is found in the nucleus. In Saccharomyces cerevisiae (strain ATCC 204508 / S288c) (Baker's yeast), this protein is Protein BMH2 (BMH2).